A 2280-amino-acid polypeptide reads, in one-letter code: Protein Ycf2 (2280 aa).

1631–1638 contributes to the ATP binding site; sequence GSIGTGRS.

Belongs to the Ycf2 family.

The protein resides in the plastid. Its subcellular location is the chloroplast stroma. Its function is as follows. Probable ATPase of unknown function. Its presence in a non-photosynthetic plant (Epifagus virginiana) and experiments in tobacco indicate that it has an essential function which is probably not related to photosynthesis. This Nicotiana tomentosiformis (Tobacco) protein is Protein Ycf2.